The sequence spans 360 residues: Peptide chain release factor 1 (360 aa).

Gln-235 is modified (N5-methylglutamine). The interval Lys-285–Ser-304 is disordered.

This sequence belongs to the prokaryotic/mitochondrial release factor family. In terms of processing, methylated by PrmC. Methylation increases the termination efficiency of RF1.

The protein resides in the cytoplasm. Peptide chain release factor 1 directs the termination of translation in response to the peptide chain termination codons UAG and UAA. The polypeptide is Peptide chain release factor 1 (Edwardsiella ictaluri (strain 93-146)).